The primary structure comprises 344 residues: Dihydroorotase (344 aa).

2 residues coordinate Zn(2+): histidine 14 and histidine 16. Substrate contacts are provided by residues 16–18 (HFR) and asparagine 42. Zn(2+) is bound by residues lysine 100, histidine 137, and histidine 175. The residue at position 100 (lysine 100) is an N6-carboxylysine. Histidine 137 is a binding site for substrate. Leucine 220 contributes to the substrate binding site. A Zn(2+)-binding site is contributed by aspartate 248. Residue aspartate 248 is part of the active site. Substrate contacts are provided by histidine 252 and alanine 264.

The protein belongs to the metallo-dependent hydrolases superfamily. DHOase family. Class II DHOase subfamily. Homodimer. The cofactor is Zn(2+).

The enzyme catalyses (S)-dihydroorotate + H2O = N-carbamoyl-L-aspartate + H(+). It functions in the pathway pyrimidine metabolism; UMP biosynthesis via de novo pathway; (S)-dihydroorotate from bicarbonate: step 3/3. In terms of biological role, catalyzes the reversible cyclization of carbamoyl aspartate to dihydroorotate. The sequence is that of Dihydroorotase from Erythrobacter litoralis (strain HTCC2594).